Here is a 120-residue protein sequence, read N- to C-terminus: Putative pterin-4-alpha-carbinolamine dehydratase (120 aa).

This sequence belongs to the pterin-4-alpha-carbinolamine dehydratase family.

It carries out the reaction (4aS,6R)-4a-hydroxy-L-erythro-5,6,7,8-tetrahydrobiopterin = (6R)-L-erythro-6,7-dihydrobiopterin + H2O. The sequence is that of Putative pterin-4-alpha-carbinolamine dehydratase from Saccharomyces cerevisiae (strain ATCC 204508 / S288c) (Baker's yeast).